The chain runs to 309 residues: MSAAVAAPARTRLTHLQRLEAESIHIFREAVAEAENPVMLYSIGKDSSVLLHLALKAFAPGRLPFPLLHIDTTWKFREMIAFRDRRAKELGLELIVHTNQDGLAKGIGPVSHGSEVHTDVMKTQALRQALDTYKYDVAFGGARRDEEASRAKERIVSLRNAQHRWDPKRQRAEPWHLYNFKKRRGESFRVFPLSNWTELDIWLYIEQENIPIVPLYFAAERPVVERDGQLIMVDDDRFPLEPGETPQQRQVRFRTLGCYPLTGAVESPAATLPEIIGETLAARTSERQGRVIDKDGAGAMERKKQEGYF.

It belongs to the PAPS reductase family. CysD subfamily. Heterodimer composed of CysD, the smaller subunit, and CysN.

The catalysed reaction is sulfate + ATP + H(+) = adenosine 5'-phosphosulfate + diphosphate. It functions in the pathway sulfur metabolism; hydrogen sulfide biosynthesis; sulfite from sulfate: step 1/3. In terms of biological role, with CysN forms the ATP sulfurylase (ATPS) that catalyzes the adenylation of sulfate producing adenosine 5'-phosphosulfate (APS) and diphosphate, the first enzymatic step in sulfur assimilation pathway. APS synthesis involves the formation of a high-energy phosphoric-sulfuric acid anhydride bond driven by GTP hydrolysis by CysN coupled to ATP hydrolysis by CysD. The protein is Sulfate adenylyltransferase subunit 2 of Methylorubrum populi (strain ATCC BAA-705 / NCIMB 13946 / BJ001) (Methylobacterium populi).